We begin with the raw amino-acid sequence, 360 residues long: N6-Methyl-AMP deaminase (360 aa).

Zn(2+) is bound by residues His23 and His25. N(6)-methyl-AMP is bound by residues His25, Asn27, His73, 105–108, Asp147, and Gly180; that span reads STPR. Residue His207 coordinates Zn(2+). Glu210, Asp292, and Asp293 together coordinate N(6)-methyl-AMP. Residue Glu210 is the Proton donor of the active site. Asp292 is a Zn(2+) binding site.

It belongs to the metallo-dependent hydrolases superfamily. Adenosine and AMP deaminases family. As to quaternary structure, monomer. The cofactor is Zn(2+).

The enzyme catalyses N(6)-methyl-AMP + H2O + H(+) = IMP + methylamine. In terms of biological role, catalyzes the hydrolysis of the free cytosolic methylated adenosine nucleotide N(6)-methyl-AMP (N6-mAMP) to produce inositol monophosphate (IMP) and methylamine. Is required for the catabolism of cytosolic N6-mAMP, which is derived from the degradation of mRNA containing N6-methylated adenine (m6A). The polypeptide is N6-Methyl-AMP deaminase (Mapda) (Mus musculus (Mouse)).